A 339-amino-acid polypeptide reads, in one-letter code: N-acetyl-gamma-glutamyl-phosphate reductase (339 aa).

The active site involves cysteine 145.

The protein belongs to the NAGSA dehydrogenase family. Type 1 subfamily.

It is found in the cytoplasm. It catalyses the reaction N-acetyl-L-glutamate 5-semialdehyde + phosphate + NADP(+) = N-acetyl-L-glutamyl 5-phosphate + NADPH + H(+). Its pathway is amino-acid biosynthesis; L-arginine biosynthesis; N(2)-acetyl-L-ornithine from L-glutamate: step 3/4. Catalyzes the NADPH-dependent reduction of N-acetyl-5-glutamyl phosphate to yield N-acetyl-L-glutamate 5-semialdehyde. This is N-acetyl-gamma-glutamyl-phosphate reductase from Kosmotoga olearia (strain ATCC BAA-1733 / DSM 21960 / TBF 19.5.1).